Here is a 153-residue protein sequence, read N- to C-terminus: Coiled-coil domain-containing protein 182 (153 aa).

The stretch at 46 to 109 forms a coiled coil; the sequence is ADLEILQQKV…RLREEEDRGI (64 aa).

The polypeptide is Coiled-coil domain-containing protein 182 (CCDC182) (Homo sapiens (Human)).